A 191-amino-acid chain; its full sequence is MEYFDMRKMSVNLWRNAAGETREICTFPPAKRDFYWRASITSIAANGEFSLFPGMERIVTLLEGGEMFLESADRFNHTLKPLQPFAFAADQVVKAKLTAGQMSMDFNIMTRLDVCKAKVRIAERTFTTFGSRGGVVFVINGAWQLGDKLLTTDQGACWFDGRHTLRLLQPQGKLLFSEINWLAGHSPDQVQ.

It belongs to the Ves family.

This chain is Protein Ves, found in Escherichia coli (strain SMS-3-5 / SECEC).